Consider the following 352-residue polypeptide: Heat-inducible transcription repressor HrcA (352 aa).

Belongs to the HrcA family.

Its function is as follows. Negative regulator of class I heat shock genes (grpE-dnaK-dnaJ and groELS operons). Prevents heat-shock induction of these operons. This chain is Heat-inducible transcription repressor HrcA, found in Latilactobacillus sakei subsp. sakei (strain 23K) (Lactobacillus sakei subsp. sakei).